A 122-amino-acid chain; its full sequence is Small ribosomal subunit protein uS13 (122 aa).

A disordered region spans residues S95–K122. Over residues R108–K122 the composition is skewed to basic residues.

It belongs to the universal ribosomal protein uS13 family. As to quaternary structure, part of the 30S ribosomal subunit. Forms a loose heterodimer with protein S19. Forms two bridges to the 50S subunit in the 70S ribosome.

Its function is as follows. Located at the top of the head of the 30S subunit, it contacts several helices of the 16S rRNA. In the 70S ribosome it contacts the 23S rRNA (bridge B1a) and protein L5 of the 50S subunit (bridge B1b), connecting the 2 subunits; these bridges are implicated in subunit movement. Contacts the tRNAs in the A and P-sites. The chain is Small ribosomal subunit protein uS13 from Desulforapulum autotrophicum (strain ATCC 43914 / DSM 3382 / VKM B-1955 / HRM2) (Desulfobacterium autotrophicum).